The following is a 1388-amino-acid chain: ESX-5 secretion system protein EccC5 (1388 aa).

2 helical membrane passes run 38 to 58 (WLIV…AMVF) and 65 to 85 (FGGV…MMMF). 3 consecutive FtsK domains span residues 477–679 (GELL…GAAQ), 855–1049 (QPPW…EDAK), and 1158–1351 (LQPV…DPDE). ATP contacts are provided by residues 500-507 (GTTGSGKS), 873-880 (GAGGSGKT), and 1175-1182 (GRRECGRT).

As to quaternary structure, part of the ESX-5 / type VII secretion system (T7SS), which is composed of cytosolic and membrane components. The ESX-5 membrane complex is composed of EccB5, EccC5, EccD5 and EccE5.

The protein resides in the cell inner membrane. Functionally, part of the ESX-5 specialized secretion system, which is responsible for the secretion of EsxN and a number of PE_PGRS and PPE proteins. This component is essential for ESX-5 complex stability and secretion. This Mycobacterium marinum (strain ATCC BAA-535 / M) protein is ESX-5 secretion system protein EccC5.